The sequence spans 379 residues: Alanine racemase (379 aa).

K40 serves as the catalytic Proton acceptor; specific for D-alanine. An N6-(pyridoxal phosphate)lysine modification is found at K40. R138 contributes to the substrate binding site. Residue Y267 is the Proton acceptor; specific for L-alanine of the active site. M315 contributes to the substrate binding site.

This sequence belongs to the alanine racemase family. The cofactor is pyridoxal 5'-phosphate.

The catalysed reaction is L-alanine = D-alanine. It participates in amino-acid biosynthesis; D-alanine biosynthesis; D-alanine from L-alanine: step 1/1. Its function is as follows. Catalyzes the interconversion of L-alanine and D-alanine. May also act on other amino acids. The protein is Alanine racemase (alr) of Halothermothrix orenii (strain H 168 / OCM 544 / DSM 9562).